The primary structure comprises 189 residues: GTP cyclohydrolase 1 (189 aa).

Zn(2+) contacts are provided by Cys78, His81, and Cys150.

This sequence belongs to the GTP cyclohydrolase I family. In terms of assembly, homomer.

It carries out the reaction GTP + H2O = 7,8-dihydroneopterin 3'-triphosphate + formate + H(+). It participates in cofactor biosynthesis; 7,8-dihydroneopterin triphosphate biosynthesis; 7,8-dihydroneopterin triphosphate from GTP: step 1/1. This chain is GTP cyclohydrolase 1, found in Lysinibacillus sphaericus (strain C3-41).